A 262-amino-acid polypeptide reads, in one-letter code: Phosphatidylglycerol--prolipoprotein diacylglyceryl transferase (262 aa).

A run of 4 helical transmembrane segments spans residues 9–29 (LGPLAIRWYALCIVTGLILAV), 41–61 (IIPDDILDFILVAFPLAILGA), 80–100 (IFAIWNGGLAIYGGLITGALV), and 109–129 (LINTWDFLDIAAPSVMIAQSL). Arg-131 is a binding site for a 1,2-diacyl-sn-glycero-3-phospho-(1'-sn-glycerol). A run of 3 helical transmembrane segments spans residues 167–187 (QPTFLYESLWNLLGFALILIF), 197–217 (GHITAFYLIWYGFGRMVIEGM), and 226–246 (GLRVSQWLSVVFIGLGIMIVI).

It belongs to the Lgt family.

The protein localises to the cell membrane. The enzyme catalyses L-cysteinyl-[prolipoprotein] + a 1,2-diacyl-sn-glycero-3-phospho-(1'-sn-glycerol) = an S-1,2-diacyl-sn-glyceryl-L-cysteinyl-[prolipoprotein] + sn-glycerol 1-phosphate + H(+). It participates in protein modification; lipoprotein biosynthesis (diacylglyceryl transfer). In terms of biological role, catalyzes the transfer of the diacylglyceryl group from phosphatidylglycerol to the sulfhydryl group of the N-terminal cysteine of a prolipoprotein, the first step in the formation of mature lipoproteins. The polypeptide is Phosphatidylglycerol--prolipoprotein diacylglyceryl transferase (Streptococcus pneumoniae (strain ATCC 700669 / Spain 23F-1)).